An 83-amino-acid polypeptide reads, in one-letter code: Short neurotoxin B (83 aa).

The N-terminal stretch at 1–21 (MKTLLLTLVVVTIVCLDLGYT) is a signal peptide. Disulfide bonds link cysteine 24–cysteine 45, cysteine 38–cysteine 62, cysteine 64–cysteine 75, and cysteine 76–cysteine 81.

Belongs to the three-finger toxin family. Short-chain subfamily. Type I alpha-neurotoxin sub-subfamily. As to expression, expressed by the venom gland.

It is found in the secreted. Functionally, binds to muscle nicotinic acetylcholine receptor (nAChR) and inhibit acetylcholine from binding to the receptor, thereby impairing neuromuscular transmission. This is Short neurotoxin B from Laticauda laticaudata (Blue-ringed sea krait).